We begin with the raw amino-acid sequence, 582 residues long: 15-cis-phytoene desaturase, chloroplastic/chromoplastic (582 aa).

Residues 1–110 (MPQIGLVSAV…FRSSPRPTKP (110 aa)) constitute a chloroplast and chromoplast transit peptide. Residues 140–141 (EA), Lys148, 165–166 (HI), and Tyr171 contribute to the FAD site. Residue Arg306 coordinates substrate. FAD contacts are provided by Ile348 and Asp537. Ala545 contacts substrate. Residue Met547 participates in FAD binding.

Belongs to the carotenoid/retinoid oxidoreductase family. As to quaternary structure, homotetramer. Requires FAD as cofactor.

The protein localises to the plastid. The protein resides in the chloroplast. Its subcellular location is the chromoplast. It localises to the membrane. It carries out the reaction 2 a plastoquinone + 15-cis-phytoene = 9,9',15-tri-cis-zeta-carotene + 2 a plastoquinol. It functions in the pathway carotenoid biosynthesis; lycopene biosynthesis. Inhibited by the herbicides metflurazon, difunone, fluridone and diflufenican. Functionally, converts phytoene into zeta-carotene via the intermediary of phytofluene by the symmetrical introduction of two double bonds at the C-11 and C-11' positions of phytoene with a concomitant isomerization of two neighboring double bonds at the C9 and C9' positions from trans to cis. The sequence is that of 15-cis-phytoene desaturase, chloroplastic/chromoplastic (PDS) from Capsicum annuum (Capsicum pepper).